We begin with the raw amino-acid sequence, 225 residues long: Interleukin-6 (225 aa).

The signal sequence occupies residues 1-24; the sequence is MPSRLNVFWLCAAALAALLRCAPA. Residue Asn-98 is glycosylated (N-linked (GlcNAc...) asparagine).

This sequence belongs to the IL-6 superfamily. As to quaternary structure, component of a hexamer of two molecules each of IL6, IL6R and IL6ST; first binds to IL6R to associate with the signaling subunit IL6ST. Expressed in white muscle, skin, spleen, anterior intestine and stomach. Not expressed in brain, gill, head kidney, posterior intestine and adipose tissue.

The protein resides in the secreted. Functionally, cytokine with a wide variety of biological functions in immunity, tissue regeneration, and metabolism. Binds to IL6R, then the complex associates to the signaling subunit IL6ST/gp130 to trigger the intracellular IL6-signaling pathway. The interaction with the membrane-bound IL6R and IL6ST stimulates 'classic signaling', whereas the binding of IL6 and soluble IL6R to IL6ST stimulates 'trans-signaling'. Alternatively, 'cluster signaling' occurs when membrane-bound IL6:IL6R complexes on transmitter cells activate IL6ST receptors on neighboring receiver cells. The polypeptide is Interleukin-6 (il6) (Sparus aurata (Gilthead sea bream)).